A 329-amino-acid polypeptide reads, in one-letter code: 4-hydroxythreonine-4-phosphate dehydrogenase (329 aa).

Substrate contacts are provided by H136 and T137. Positions 166, 211, and 266 each coordinate a divalent metal cation. K274, N283, and R292 together coordinate substrate.

The protein belongs to the PdxA family. Homodimer. Zn(2+) serves as cofactor. The cofactor is Mg(2+). It depends on Co(2+) as a cofactor.

Its subcellular location is the cytoplasm. It carries out the reaction 4-(phosphooxy)-L-threonine + NAD(+) = 3-amino-2-oxopropyl phosphate + CO2 + NADH. It participates in cofactor biosynthesis; pyridoxine 5'-phosphate biosynthesis; pyridoxine 5'-phosphate from D-erythrose 4-phosphate: step 4/5. In terms of biological role, catalyzes the NAD(P)-dependent oxidation of 4-(phosphooxy)-L-threonine (HTP) into 2-amino-3-oxo-4-(phosphooxy)butyric acid which spontaneously decarboxylates to form 3-amino-2-oxopropyl phosphate (AHAP). The protein is 4-hydroxythreonine-4-phosphate dehydrogenase of Shigella boydii serotype 18 (strain CDC 3083-94 / BS512).